We begin with the raw amino-acid sequence, 146 residues long: Probable flagellum biosynthesis repressor protein FlbT 1 (146 aa).

This sequence belongs to the FlbT family.

In terms of biological role, has a post-transcriptional repressor function in flagellum biogenesis. Associates with the 5'-UTR of fljK mRNA and promotes its degradation. The chain is Probable flagellum biosynthesis repressor protein FlbT 1 from Bradyrhizobium diazoefficiens (strain JCM 10833 / BCRC 13528 / IAM 13628 / NBRC 14792 / USDA 110).